Here is a 256-residue protein sequence, read N- to C-terminus: MLKSRIIPCLDVKDGRVVKGVNFVDLTDAGDPVEAAIRYDAAGADELCFLDITASSDDRPILLDVVRRTAEACFMPLTVGGGVRTLDDIRALLLAGADKASIMTAAVANRDFVREAAEKFGSQCVVVAIDAKQVRPGRWEIFTHGGRKPTGLDAVDYAREVVALGAGEILLTSMDRDGAKTGFDIPLTKAVTDAVNVPVIASGGVGTLDHLVEGVRDGGASAVLAASIFHFGEFTIAEAKLHMANCGLRMRLDGIV.

Catalysis depends on residues aspartate 11 and aspartate 130.

It belongs to the HisA/HisF family. Heterodimer of HisH and HisF.

It is found in the cytoplasm. The catalysed reaction is 5-[(5-phospho-1-deoxy-D-ribulos-1-ylimino)methylamino]-1-(5-phospho-beta-D-ribosyl)imidazole-4-carboxamide + L-glutamine = D-erythro-1-(imidazol-4-yl)glycerol 3-phosphate + 5-amino-1-(5-phospho-beta-D-ribosyl)imidazole-4-carboxamide + L-glutamate + H(+). Its pathway is amino-acid biosynthesis; L-histidine biosynthesis; L-histidine from 5-phospho-alpha-D-ribose 1-diphosphate: step 5/9. In terms of biological role, IGPS catalyzes the conversion of PRFAR and glutamine to IGP, AICAR and glutamate. The HisF subunit catalyzes the cyclization activity that produces IGP and AICAR from PRFAR using the ammonia provided by the HisH subunit. The chain is Imidazole glycerol phosphate synthase subunit HisF from Methylocella silvestris (strain DSM 15510 / CIP 108128 / LMG 27833 / NCIMB 13906 / BL2).